Reading from the N-terminus, the 87-residue chain is UPF0250 protein NT01EI_2946 (87 aa).

This sequence belongs to the UPF0250 family.

This Edwardsiella ictaluri (strain 93-146) protein is UPF0250 protein NT01EI_2946.